Consider the following 452-residue polypeptide: Probable E3 ubiquitin-protein ligase ARI15 (452 aa).

Residues 22-256 (SRVYCGICSN…GTSGSCLAPA (235 aa)) are TRIAD supradomain. Zn(2+)-binding residues include Cys-26, Cys-29, Cys-54, His-56, Cys-59, Cys-62, Cys-83, Cys-88, Cys-128, Cys-133, Cys-154, Cys-156, Cys-161, Cys-164, His-169, Cys-174, Cys-208, Cys-211, Cys-229, Cys-231, Cys-236, Cys-239, His-246, and Cys-252. Residues 26-88 (CGICSNIGDD…TAISCPDRDC (63 aa)) form an RING-type 1 zinc finger. Residues 106-174 (AMYELYILKS…MLESHRPVTC (69 aa)) form an IBR-type zinc finger. The RING-type 2; atypical zinc finger occupies 208–239 (CPHCFIPVEIDGERPWAQFLTCVCSGRFCWKC). The segment at 414–445 (NYGGPYWLCDRCTYGNSWFQRACKMCCDPTAS) adopts a RanBP2-type zinc-finger fold.

The protein belongs to the RBR family. Ariadne subfamily. The cofactor is Zn(2+). As to expression, ubiquitous.

The catalysed reaction is [E2 ubiquitin-conjugating enzyme]-S-ubiquitinyl-L-cysteine + [acceptor protein]-L-lysine = [E2 ubiquitin-conjugating enzyme]-L-cysteine + [acceptor protein]-N(6)-ubiquitinyl-L-lysine.. Its pathway is protein modification; protein ubiquitination. Might act as an E3 ubiquitin-protein ligase, or as part of E3 complex, which accepts ubiquitin from specific E2 ubiquitin-conjugating enzymes and then transfers it to substrates. This Arabidopsis thaliana (Mouse-ear cress) protein is Probable E3 ubiquitin-protein ligase ARI15 (ARI15).